Consider the following 100-residue polypeptide: Urease subunit gamma (100 aa).

Belongs to the urease gamma subunit family. As to quaternary structure, heterotrimer of UreA (gamma), UreB (beta) and UreC (alpha) subunits. Three heterotrimers associate to form the active enzyme.

The protein localises to the cytoplasm. The catalysed reaction is urea + 2 H2O + H(+) = hydrogencarbonate + 2 NH4(+). Its pathway is nitrogen metabolism; urea degradation; CO(2) and NH(3) from urea (urease route): step 1/1. The polypeptide is Urease subunit gamma (Stutzerimonas stutzeri (strain A1501) (Pseudomonas stutzeri)).